We begin with the raw amino-acid sequence, 271 residues long: Zinc finger CCHC domain-containing protein 9 (271 aa).

The segment at 1–40 (MTRWARVSTTYNKRPLPATSWEDMKKGSFEGTSQNLPKRK) is disordered. A Phosphoserine modification is found at S48. 4 CCHC-type zinc fingers span residues 128 to 145 (MVCF…DCPA), 155 to 172 (GICY…KCKA), 184 to 201 (AKCF…SCPD), and 211 to 228 (GGCK…DCPE).

The protein resides in the nucleus. Its subcellular location is the nucleolus. In terms of biological role, may down-regulate transcription mediated by NF-kappa-B and the serum response element. In Homo sapiens (Human), this protein is Zinc finger CCHC domain-containing protein 9 (ZCCHC9).